Reading from the N-terminus, the 203-residue chain is Holliday junction branch migration complex subunit RuvA (203 aa).

The domain I stretch occupies residues 1 to 63 (MIGQLSGKVD…EEHIHLYGFL (63 aa)). Residues 64–142 (NLEEKIFFNL…KISSGSAIIK (79 aa)) are domain II. The segment at 143–149 (ESLNIKH) is flexible linker. Positions 150-203 (ITPVASNEVIKALVNLGFSRFEAQNAVQGIITQNPEISIDELIKTALKNRNSNF) are domain III.

Belongs to the RuvA family. Homotetramer. Forms an RuvA(8)-RuvB(12)-Holliday junction (HJ) complex. HJ DNA is sandwiched between 2 RuvA tetramers; dsDNA enters through RuvA and exits via RuvB. An RuvB hexamer assembles on each DNA strand where it exits the tetramer. Each RuvB hexamer is contacted by two RuvA subunits (via domain III) on 2 adjacent RuvB subunits; this complex drives branch migration. In the full resolvosome a probable DNA-RuvA(4)-RuvB(12)-RuvC(2) complex forms which resolves the HJ.

It is found in the cytoplasm. Its function is as follows. The RuvA-RuvB-RuvC complex processes Holliday junction (HJ) DNA during genetic recombination and DNA repair, while the RuvA-RuvB complex plays an important role in the rescue of blocked DNA replication forks via replication fork reversal (RFR). RuvA specifically binds to HJ cruciform DNA, conferring on it an open structure. The RuvB hexamer acts as an ATP-dependent pump, pulling dsDNA into and through the RuvAB complex. HJ branch migration allows RuvC to scan DNA until it finds its consensus sequence, where it cleaves and resolves the cruciform DNA. This is Holliday junction branch migration complex subunit RuvA from Rickettsia africae (strain ESF-5).